The sequence spans 442 residues: tRNA-2-methylthio-N(6)-dimethylallyladenosine synthase (442 aa).

Residues 2–117 enclose the MTTase N-terminal domain; it reads QGLYIKSYGC…LPELIIKARR (116 aa). The [4Fe-4S] cluster site is built by Cys-11, Cys-47, Cys-80, Cys-157, Cys-161, and Cys-164. A Radical SAM core domain is found at 143-374; that stretch reads KNQEVSAFIS…QELLREQQLA (232 aa). Residues 377–442 form the TRAM domain; that stretch reads RNMIGQTCSV…QNSVTGIVVN (66 aa).

This sequence belongs to the methylthiotransferase family. MiaB subfamily. Monomer. The cofactor is [4Fe-4S] cluster.

It is found in the cytoplasm. It carries out the reaction N(6)-dimethylallyladenosine(37) in tRNA + (sulfur carrier)-SH + AH2 + 2 S-adenosyl-L-methionine = 2-methylsulfanyl-N(6)-dimethylallyladenosine(37) in tRNA + (sulfur carrier)-H + 5'-deoxyadenosine + L-methionine + A + S-adenosyl-L-homocysteine + 2 H(+). Functionally, catalyzes the methylthiolation of N6-(dimethylallyl)adenosine (i(6)A), leading to the formation of 2-methylthio-N6-(dimethylallyl)adenosine (ms(2)i(6)A) at position 37 in tRNAs that read codons beginning with uridine. The chain is tRNA-2-methylthio-N(6)-dimethylallyladenosine synthase from Ehrlichia chaffeensis (strain ATCC CRL-10679 / Arkansas).